Consider the following 239-residue polypeptide: RNA chaperone ProQ (239 aa).

Residues 107 to 177 are disordered; that stretch reads KARVQAQRAE…RKPVAKPVQA (71 aa). The segment covering 115 to 137 has biased composition (basic and acidic residues); sequence AEQRAKKREAENVAAGEKNERPT.

It belongs to the ProQ family.

Its subcellular location is the cytoplasm. Its function is as follows. RNA chaperone with significant RNA binding, RNA strand exchange and RNA duplexing activities. May regulate ProP activity through an RNA-based, post-transcriptional mechanism. This Photorhabdus laumondii subsp. laumondii (strain DSM 15139 / CIP 105565 / TT01) (Photorhabdus luminescens subsp. laumondii) protein is RNA chaperone ProQ.